We begin with the raw amino-acid sequence, 302 residues long: tRNA pseudouridine synthase B (302 aa).

Asp-45 serves as the catalytic Nucleophile.

The protein belongs to the pseudouridine synthase TruB family. Type 1 subfamily.

It carries out the reaction uridine(55) in tRNA = pseudouridine(55) in tRNA. Its function is as follows. Responsible for synthesis of pseudouridine from uracil-55 in the psi GC loop of transfer RNAs. The polypeptide is tRNA pseudouridine synthase B (Francisella philomiragia subsp. philomiragia (strain ATCC 25017 / CCUG 19701 / FSC 153 / O#319-036)).